The primary structure comprises 309 residues: HPr kinase/phosphorylase (309 aa).

Residues H138 and K159 contribute to the active site. 153-160 (GQSGVGKS) contacts ATP. S160 is a Mg(2+) binding site. Catalysis depends on D177, which acts as the Proton acceptor; for phosphorylation activity. Proton donor; for dephosphorylation activity. Residues 201 to 210 (LEIRGLGIIN) form an important for the catalytic mechanism of both phosphorylation and dephosphorylation region. Position 202 (E202) interacts with Mg(2+). The active site involves R243. The segment at 264 to 269 (PVRPGR) is important for the catalytic mechanism of dephosphorylation.

The protein belongs to the HPrK/P family. As to quaternary structure, homohexamer. It depends on Mg(2+) as a cofactor.

It catalyses the reaction [HPr protein]-L-serine + ATP = [HPr protein]-O-phospho-L-serine + ADP + H(+). The enzyme catalyses [HPr protein]-O-phospho-L-serine + phosphate + H(+) = [HPr protein]-L-serine + diphosphate. In terms of biological role, catalyzes the ATP- as well as the pyrophosphate-dependent phosphorylation of a specific serine residue in HPr, a phosphocarrier protein of the phosphoenolpyruvate-dependent sugar phosphotransferase system (PTS). HprK/P also catalyzes the pyrophosphate-producing, inorganic phosphate-dependent dephosphorylation (phosphorolysis) of seryl-phosphorylated HPr (P-Ser-HPr). The two antagonistic activities of HprK/P are regulated by several intracellular metabolites, which change their concentration in response to the absence or presence of rapidly metabolisable carbon sources (glucose, fructose, etc.) in the growth medium. Also phosphorylates/dephosphorylates the HPr-like catabolite repression protein crh on a specific serine residue. Therefore, by controlling the phosphorylation state of HPr and crh, HPrK/P is a sensor enzyme that plays a major role in the regulation of carbon metabolism and sugar transport: it mediates carbon catabolite repression (CCR), and regulates PTS-catalyzed carbohydrate uptake and inducer exclusion. This Bacillus cereus (strain B4264) protein is HPr kinase/phosphorylase.